A 438-amino-acid polypeptide reads, in one-letter code: MKILMVGSGAREHAIAKALNKTADVYTYMGRKNPGLARISKNYTVNDESNFNEIIKFAQENNVELAFIGPEAPLEMGIVDELEKEGIHSVGPTKSAAQIETNKAFMRKLFEDYDIPGSIKYGTFYDLDEAYEFIDNFDEPVVVKPIGLTGGKGVKIVGDQLADNDEAKEYVKEIFHQKMGGFEGVVIEELLLGEEYTIQAFVDGTHLIPMPAAQDHPHAFVGNKGPITGGMGSYSDKNHLLPFLTQEDYDKSVEIMEKTIKAIAKEQEPYKGILYGQFMLCKDGPKVIEYNARFGDPESMNVLSVIDDDLAKISKQIVDGTLDSVNFLNKSSVCKYVVPDKYPNTHVADTVVDVDEDKINELGAQVFYAAVYQDMDDSIKLTSSRALGVLAVKDSIKEAEKICEEAIKYVKGEVYHRNDVATEELLNEKIKHMEEVRL.

The ATP-grasp domain occupies 107-319; the sequence is RKLFEDYDIP…LAKISKQIVD (213 aa). ATP is bound at residue 134-197; that stretch reads IDNFDEPVVV…EELLLGEEYT (64 aa). The Mg(2+) site is built by Gln277, Glu289, and Asn291. Gln277, Glu289, and Asn291 together coordinate Mn(2+).

It belongs to the GARS family. Requires Mg(2+) as cofactor. The cofactor is Mn(2+).

The catalysed reaction is 5-phospho-beta-D-ribosylamine + glycine + ATP = N(1)-(5-phospho-beta-D-ribosyl)glycinamide + ADP + phosphate + H(+). It participates in purine metabolism; IMP biosynthesis via de novo pathway; N(1)-(5-phospho-D-ribosyl)glycinamide from 5-phospho-alpha-D-ribose 1-diphosphate: step 2/2. The chain is Phosphoribosylamine--glycine ligase from Methanosphaera stadtmanae (strain ATCC 43021 / DSM 3091 / JCM 11832 / MCB-3).